The following is a 223-amino-acid chain: UPF0441 protein KPN78578_33850 (223 aa).

A disordered region spans residues 165-223 (SYGAAQPGRTMNVPKTAMAPKPATTTTVTRGGFGESVAKQSTMQRSAAGSTSSSRSMGG). 2 stretches are compositionally biased toward low complexity: residues 177–193 (VPKTAMAPKPATTTTVT) and 209–223 (RSAAGSTSSSRSMGG).

This sequence belongs to the UPF0441 family.

This is UPF0441 protein KPN78578_33850 from Klebsiella pneumoniae subsp. pneumoniae (strain ATCC 700721 / MGH 78578).